A 475-amino-acid chain; its full sequence is Ribulose bisphosphate carboxylase large chain (475 aa).

Residues 1-2 (MS) constitute a propeptide that is removed on maturation. Proline 3 carries the N-acetylproline modification. N6,N6,N6-trimethyllysine is present on lysine 14. Residues asparagine 123 and threonine 173 each coordinate substrate. The active-site Proton acceptor is the lysine 175. Residue lysine 177 coordinates substrate. Residues lysine 201, aspartate 203, and glutamate 204 each contribute to the Mg(2+) site. N6-carboxylysine is present on lysine 201. Histidine 294 (proton acceptor) is an active-site residue. Substrate contacts are provided by arginine 295, histidine 327, and serine 379.

Belongs to the RuBisCO large chain family. Type I subfamily. As to quaternary structure, heterohexadecamer of 8 large chains and 8 small chains; disulfide-linked. The disulfide link is formed within the large subunit homodimers. It depends on Mg(2+) as a cofactor. Post-translationally, the disulfide bond which can form in the large chain dimeric partners within the hexadecamer appears to be associated with oxidative stress and protein turnover.

It is found in the plastid. The protein resides in the chloroplast. The enzyme catalyses 2 (2R)-3-phosphoglycerate + 2 H(+) = D-ribulose 1,5-bisphosphate + CO2 + H2O. The catalysed reaction is D-ribulose 1,5-bisphosphate + O2 = 2-phosphoglycolate + (2R)-3-phosphoglycerate + 2 H(+). Functionally, ruBisCO catalyzes two reactions: the carboxylation of D-ribulose 1,5-bisphosphate, the primary event in carbon dioxide fixation, as well as the oxidative fragmentation of the pentose substrate in the photorespiration process. Both reactions occur simultaneously and in competition at the same active site. In Zygnema circumcarinatum (Green alga), this protein is Ribulose bisphosphate carboxylase large chain.